The chain runs to 155 residues: uncharacterized protein (155 aa).

This is an uncharacterized protein from Acanthamoeba polyphaga (Amoeba).